The primary structure comprises 760 residues: Xaa-Pro dipeptidyl-peptidase (760 aa).

Active-site charge relay system residues include Ser-349, Asp-469, and His-499.

The protein belongs to the peptidase S15 family. In terms of assembly, homodimer.

It is found in the cytoplasm. It carries out the reaction Hydrolyzes Xaa-Pro-|- bonds to release unblocked, N-terminal dipeptides from substrates including Ala-Pro-|-p-nitroanilide and (sequentially) Tyr-Pro-|-Phe-Pro-|-Gly-Pro-|-Ile.. Its function is as follows. Removes N-terminal dipeptides sequentially from polypeptides having unsubstituted N-termini provided that the penultimate residue is proline. The polypeptide is Xaa-Pro dipeptidyl-peptidase (Streptococcus pyogenes serotype M28 (strain MGAS6180)).